Consider the following 90-residue polypeptide: UPF0335 protein RPD_1405 (90 aa).

This sequence belongs to the UPF0335 family.

This chain is UPF0335 protein RPD_1405, found in Rhodopseudomonas palustris (strain BisB5).